Here is a 442-residue protein sequence, read N- to C-terminus: MSTVKTFSSTETEGFKKRLLSRRHSSYQVRDEEDDVLEEFIVLKLDLFLTRLNHRMKRLEELGLPNRKDAAAATYQFLANLQASFLGTTILGKTQVSFILRRIEETYNDVLSACDTFPAKAQKALTFLEHHLRDLEDYAEKSKNNVETLMTDIKDVVEHAAKLGAQRLITLEELPVQWHNNPYIIRGYRFYTSKRKCFRSILSWHNETFNIWTHLSAFIVFFAVLAYFYPSSSSWVSSNVSNRIVRIFFLLSAMKCLGCSVIWHTFSSLSNYKHMRCAACMDYVGISALIAASIISVEYHAFVCQGPLRFIFIAFTGTLGLIGIYTPWKKWFNEYKYRSVKIFFFVGLACSGLIPMITMFYIKGTRRTVKYLDPVFKSIFSYIIGVLFYGLHIPERFLPGKFDIIGNSHQIWHIAIIVGVAFHYTGVKRFETDYEAFSCGVL.

7 helical membrane passes run 209 to 229, 247 to 267, 284 to 304, 308 to 328, 342 to 362, 374 to 394, and 402 to 422; these read FNIW…AYFY, IFFL…HTFS, VGIS…AFVC, LRFI…YTPW, IFFF…MFYI, PVFK…LHIP, and FDII…GVAF.

It is found in the membrane. This is an uncharacterized protein from Schizosaccharomyces pombe (strain 972 / ATCC 24843) (Fission yeast).